Consider the following 358-residue polypeptide: UDP-N-acetylglucosamine--N-acetylmuramyl-(pentapeptide) pyrophosphoryl-undecaprenol N-acetylglucosamine transferase (358 aa).

UDP-N-acetyl-alpha-D-glucosamine-binding positions include 10 to 12 (TGG), asparagine 124, arginine 165, serine 187, isoleucine 243, and glutamine 288.

The protein belongs to the glycosyltransferase 28 family. MurG subfamily.

It localises to the cell inner membrane. The catalysed reaction is di-trans,octa-cis-undecaprenyl diphospho-N-acetyl-alpha-D-muramoyl-L-alanyl-D-glutamyl-meso-2,6-diaminopimeloyl-D-alanyl-D-alanine + UDP-N-acetyl-alpha-D-glucosamine = di-trans,octa-cis-undecaprenyl diphospho-[N-acetyl-alpha-D-glucosaminyl-(1-&gt;4)]-N-acetyl-alpha-D-muramoyl-L-alanyl-D-glutamyl-meso-2,6-diaminopimeloyl-D-alanyl-D-alanine + UDP + H(+). The protein operates within cell wall biogenesis; peptidoglycan biosynthesis. Cell wall formation. Catalyzes the transfer of a GlcNAc subunit on undecaprenyl-pyrophosphoryl-MurNAc-pentapeptide (lipid intermediate I) to form undecaprenyl-pyrophosphoryl-MurNAc-(pentapeptide)GlcNAc (lipid intermediate II). The protein is UDP-N-acetylglucosamine--N-acetylmuramyl-(pentapeptide) pyrophosphoryl-undecaprenol N-acetylglucosamine transferase of Syntrophotalea carbinolica (strain DSM 2380 / NBRC 103641 / GraBd1) (Pelobacter carbinolicus).